Here is a 313-residue protein sequence, read N- to C-terminus: MTDASINASMTREEEASLGDYFALLKPRVMSLVVFTAFVGLMAAPIGVHPVIGFCAILFIAIGGGASGALNMWWDADIDQVMKRTKGRPIPAGKVDKGEALSLGLALSGLSVIMLALATNVFAGAFLAFTIFFYVVIYTMWLKRATPQNIVIGGAAGAFPPVIGWIAATGSMSVEPWLMFALTFLWTPPHFWALALFMRNDYDMADVPMLTVTHGRRSTRKHILVYTVILAAFALTTAFTSVGGPIYLTTAVVLNALFLKGAVQIWRRDEEICESDNFKIERSFFKLSLLYLFLHFGAILAEALLKPYGLGGW.

Transmembrane regions (helical) follow at residues 22-42 (FALLKPRVMSLVVFTAFVGLM), 46-66 (IGVHPVIGFCAILFIAIGGGA), 98-118 (GEALSLGLALSGLSVIMLALA), 121-141 (VFAGAFLAFTIFFYVVIYTMW), 150-170 (IVIGGAAGAFPPVIGWIAATG), 177-197 (WLMFALTFLWTPPHFWALALF), 223-243 (ILVYTVILAAFALTTAFTSVG), 246-266 (IYLTTAVVLNALFLKGAVQIW), and 284-304 (FFKLSLLYLFLHFGAILAEAL).

This sequence belongs to the UbiA prenyltransferase family. Protoheme IX farnesyltransferase subfamily. In terms of assembly, interacts with CtaA.

The protein resides in the cell inner membrane. It carries out the reaction heme b + (2E,6E)-farnesyl diphosphate + H2O = Fe(II)-heme o + diphosphate. Its pathway is porphyrin-containing compound metabolism; heme O biosynthesis; heme O from protoheme: step 1/1. Its function is as follows. Converts heme B (protoheme IX) to heme O by substitution of the vinyl group on carbon 2 of heme B porphyrin ring with a hydroxyethyl farnesyl side group. In Ruegeria sp. (strain TM1040) (Silicibacter sp.), this protein is Protoheme IX farnesyltransferase.